The chain runs to 177 residues: ATP synthase subunit delta (177 aa).

It belongs to the ATPase delta chain family. F-type ATPases have 2 components, F(1) - the catalytic core - and F(0) - the membrane proton channel. F(1) has five subunits: alpha(3), beta(3), gamma(1), delta(1), epsilon(1). F(0) has three main subunits: a(1), b(2) and c(10-14). The alpha and beta chains form an alternating ring which encloses part of the gamma chain. F(1) is attached to F(0) by a central stalk formed by the gamma and epsilon chains, while a peripheral stalk is formed by the delta and b chains.

The protein localises to the cell inner membrane. In terms of biological role, f(1)F(0) ATP synthase produces ATP from ADP in the presence of a proton or sodium gradient. F-type ATPases consist of two structural domains, F(1) containing the extramembraneous catalytic core and F(0) containing the membrane proton channel, linked together by a central stalk and a peripheral stalk. During catalysis, ATP synthesis in the catalytic domain of F(1) is coupled via a rotary mechanism of the central stalk subunits to proton translocation. Its function is as follows. This protein is part of the stalk that links CF(0) to CF(1). It either transmits conformational changes from CF(0) to CF(1) or is implicated in proton conduction. The protein is ATP synthase subunit delta of Erwinia tasmaniensis (strain DSM 17950 / CFBP 7177 / CIP 109463 / NCPPB 4357 / Et1/99).